The sequence spans 121 residues: Large ribosomal subunit protein bL12 (121 aa).

It belongs to the bacterial ribosomal protein bL12 family. In terms of assembly, homodimer. Part of the ribosomal stalk of the 50S ribosomal subunit. Forms a multimeric L10(L12)X complex, where L10 forms an elongated spine to which 2 to 4 L12 dimers bind in a sequential fashion. Binds GTP-bound translation factors.

Forms part of the ribosomal stalk which helps the ribosome interact with GTP-bound translation factors. Is thus essential for accurate translation. In Alkaliphilus oremlandii (strain OhILAs) (Clostridium oremlandii (strain OhILAs)), this protein is Large ribosomal subunit protein bL12.